A 327-amino-acid polypeptide reads, in one-letter code: Aspartate carbamoyltransferase catalytic subunit (327 aa).

2 residues coordinate carbamoyl phosphate: arginine 54 and threonine 55. Lysine 82 is a binding site for L-aspartate. Carbamoyl phosphate is bound by residues arginine 104, histidine 134, and glutamine 137. Arginine 177 and arginine 232 together coordinate L-aspartate. Carbamoyl phosphate is bound by residues glycine 280 and proline 281.

It belongs to the aspartate/ornithine carbamoyltransferase superfamily. ATCase family. In terms of assembly, heterododecamer (2C3:3R2) of six catalytic PyrB chains organized as two trimers (C3), and six regulatory PyrI chains organized as three dimers (R2).

The enzyme catalyses carbamoyl phosphate + L-aspartate = N-carbamoyl-L-aspartate + phosphate + H(+). Its pathway is pyrimidine metabolism; UMP biosynthesis via de novo pathway; (S)-dihydroorotate from bicarbonate: step 2/3. Its function is as follows. Catalyzes the condensation of carbamoyl phosphate and aspartate to form carbamoyl aspartate and inorganic phosphate, the committed step in the de novo pyrimidine nucleotide biosynthesis pathway. This Micrococcus luteus (strain ATCC 4698 / DSM 20030 / JCM 1464 / CCM 169 / CCUG 5858 / IAM 1056 / NBRC 3333 / NCIMB 9278 / NCTC 2665 / VKM Ac-2230) (Micrococcus lysodeikticus) protein is Aspartate carbamoyltransferase catalytic subunit.